The sequence spans 654 residues: Insulin receptor substrate 1 (654 aa).

Residues 3 to 107 form the PH domain; the sequence is DIKKCGYLRK…WYQAILEVQA (105 aa). Y36 bears the Phosphotyrosine mark. An IRS-type PTB domain is found at 126-230; sequence FREVWQVSVR…EAMKSLSEEF (105 aa). A disordered region spans residues 228-329; it reads EEFRPRTKSQ…EYGSSPGVLE (102 aa). Residues 235–245 show a composition bias toward polar residues; that stretch reads KSQSLSSTPIS. At S276 the chain carries Phosphoserine. The span at 307–321 shows a compositional bias: polar residues; the sequence is NESSADYGSASSDEY. Y345 carries the phosphotyrosine; by INSR modification. 6 consecutive short sequence motifs (YXXM motif) follow at residues 345–348, 384–387, 398–401, 411–414, 430–433, and 466–469; these read YISM, YAMM, YMPM, YVMM, and YMNM. Phosphotyrosine; by INSR occurs at positions 398 and 411. Y430 carries the post-translational modification Phosphotyrosine. Disordered stretches follow at residues 473-494 and 507-532; these read SRSASSTPPPQEAFLSSPGGPC and YKMEPQPSARASCSSSSDSLEEVNAG. A compositionally biased stretch (low complexity) spans 514-524; the sequence is SARASCSSSSD. Phosphotyrosine; by INSR is present on Y563.

As to quaternary structure, interacts with the NPXY motif of tyrosine-phosphorylated igf1r and insr via the PTB domain. Binds to phosphatidylinositol 3-kinase p85 subunit via the phosphorylated YXXM motifs.

Functionally, may mediate the control of various cellular processes by insulin. When phosphorylated by the insulin receptor binds specifically to various cellular proteins containing SH2 domains such as phosphatidylinositol 3-kinase p85 subunit or grb2. Activates phosphatidylinositol 3-kinase when bound to the regulatory p85 subunit. The protein is Insulin receptor substrate 1 of Xenopus tropicalis (Western clawed frog).